A 461-amino-acid polypeptide reads, in one-letter code: Cysteine--tRNA ligase (461 aa).

Cys-28 contacts Zn(2+). Residues 30–40 (VTIYDLCHIGH) carry the 'HIGH' region motif. The Zn(2+) site is built by Cys-209, His-234, and Glu-238. The 'KMSKS' region signature appears at 266–270 (KMSKS). Lys-269 serves as a coordination point for ATP.

Belongs to the class-I aminoacyl-tRNA synthetase family. As to quaternary structure, monomer. Requires Zn(2+) as cofactor.

Its subcellular location is the cytoplasm. The enzyme catalyses tRNA(Cys) + L-cysteine + ATP = L-cysteinyl-tRNA(Cys) + AMP + diphosphate. This is Cysteine--tRNA ligase from Serratia proteamaculans (strain 568).